Here is a 305-residue protein sequence, read N- to C-terminus: UDP-3-O-acyl-N-acetylglucosamine deacetylase (305 aa).

Zn(2+) contacts are provided by His78, His235, and Asp239. His262 serves as the catalytic Proton donor.

It belongs to the LpxC family. Zn(2+) is required as a cofactor.

The enzyme catalyses a UDP-3-O-[(3R)-3-hydroxyacyl]-N-acetyl-alpha-D-glucosamine + H2O = a UDP-3-O-[(3R)-3-hydroxyacyl]-alpha-D-glucosamine + acetate. It participates in glycolipid biosynthesis; lipid IV(A) biosynthesis; lipid IV(A) from (3R)-3-hydroxytetradecanoyl-[acyl-carrier-protein] and UDP-N-acetyl-alpha-D-glucosamine: step 2/6. In terms of biological role, catalyzes the hydrolysis of UDP-3-O-myristoyl-N-acetylglucosamine to form UDP-3-O-myristoylglucosamine and acetate, the committed step in lipid A biosynthesis. The chain is UDP-3-O-acyl-N-acetylglucosamine deacetylase from Citrifermentans bemidjiense (strain ATCC BAA-1014 / DSM 16622 / JCM 12645 / Bem) (Geobacter bemidjiensis).